We begin with the raw amino-acid sequence, 324 residues long: Phospho-N-acetylmuramoyl-pentapeptide-transferase (324 aa).

9 consecutive transmembrane segments (helical) span residues 13–33 (VLSA…IFIP), 59–79 (PTMG…IIGY), 85–105 (GMVV…DDIL), 121–141 (MILL…NIGT), 143–163 (IIIP…PLVV), 179–199 (IDGL…IVGF), 201–221 (TGHY…LGFL), 243–263 (AIAT…VGGI), and 303–323 (VKLV…GFIA).

This sequence belongs to the glycosyltransferase 4 family. MraY subfamily. Mg(2+) is required as a cofactor.

It localises to the cell membrane. It carries out the reaction UDP-N-acetyl-alpha-D-muramoyl-L-alanyl-gamma-D-glutamyl-meso-2,6-diaminopimeloyl-D-alanyl-D-alanine + di-trans,octa-cis-undecaprenyl phosphate = di-trans,octa-cis-undecaprenyl diphospho-N-acetyl-alpha-D-muramoyl-L-alanyl-D-glutamyl-meso-2,6-diaminopimeloyl-D-alanyl-D-alanine + UMP. It participates in cell wall biogenesis; peptidoglycan biosynthesis. Functionally, catalyzes the initial step of the lipid cycle reactions in the biosynthesis of the cell wall peptidoglycan: transfers peptidoglycan precursor phospho-MurNAc-pentapeptide from UDP-MurNAc-pentapeptide onto the lipid carrier undecaprenyl phosphate, yielding undecaprenyl-pyrophosphoryl-MurNAc-pentapeptide, known as lipid I. The protein is Phospho-N-acetylmuramoyl-pentapeptide-transferase of Clostridium botulinum (strain Alaska E43 / Type E3).